A 163-amino-acid polypeptide reads, in one-letter code: Protein EARLY RESPONSIVE TO DEHYDRATION 15 (163 aa).

A PAM2-like motif is present at residues 10 to 20 (TLNPDAPLFIP). Residues 118-163 (NGEMVKKSSGNRSPRSIVEPAKYAEKPAKWGNQRVAAAPRNIHQPR) are disordered.

Interacts with PAB2, PAB4 and PAB8. Interacts with MPC. Expressed in cauline leaves, stems, rosette leaves, immature siliques and primary inflorescences.

It is found in the cytoplasm. Central component of stress responses that interacts with poly(A)-binding proteins. Negative regulator of abscisic acid (ABA) responses, including resistance to drought and freezing as well as stomatal closure regulation. Mediates resistance to the bacterial necrotroph pathogen Erwinia carotovora subsp. carotovora and promotes the induction of marker genes for systemic acquired resistance (SAR). The polypeptide is Protein EARLY RESPONSIVE TO DEHYDRATION 15 (ERD15) (Arabidopsis thaliana (Mouse-ear cress)).